The following is a 174-amino-acid chain: Large ribosomal subunit protein uL10 (174 aa).

This sequence belongs to the universal ribosomal protein uL10 family. In terms of assembly, part of the ribosomal stalk of the 50S ribosomal subunit. The N-terminus interacts with L11 and the large rRNA to form the base of the stalk. The C-terminus forms an elongated spine to which L12 dimers bind in a sequential fashion forming a multimeric L10(L12)X complex.

Functionally, forms part of the ribosomal stalk, playing a central role in the interaction of the ribosome with GTP-bound translation factors. This is Large ribosomal subunit protein uL10 from Nitrosospira multiformis (strain ATCC 25196 / NCIMB 11849 / C 71).